The primary structure comprises 460 residues: Cyclic 2,3-diphosphoglycerate synthetase (460 aa).

Homodimer.

It localises to the cytoplasm. It catalyses the reaction (2R)-2,3-bisphosphoglycerate + ATP + H(+) = cyclic (2R)-2,3-bisphosphoglycerate + ADP + phosphate. Its function is as follows. Catalyzes the formation of cyclic 2,3-diphosphoglycerate (cDPG) by formation of an intramolecular phosphoanhydride bond at the expense of ATP. It is also able to catalyze the hydrolysis of cDPG but with significant slower rates (8-10 times). May be involved in thermoadaptation. This is Cyclic 2,3-diphosphoglycerate synthetase (cpgS) from Methanothermus fervidus (strain ATCC 43054 / DSM 2088 / JCM 10308 / V24 S).